The sequence spans 201 residues: Recombination protein RecR (201 aa).

The segment at 60–75 (CSCCGNVDTSDPCTIC) adopts a C4-type zinc-finger fold. One can recognise a Toprim domain in the interval 83 to 178 (TTLIVVEDVS…RVTRLAHGVP (96 aa)).

It belongs to the RecR family.

May play a role in DNA repair. It seems to be involved in an RecBC-independent recombinational process of DNA repair. It may act with RecF and RecO. The sequence is that of Recombination protein RecR from Brucella anthropi (strain ATCC 49188 / DSM 6882 / CCUG 24695 / JCM 21032 / LMG 3331 / NBRC 15819 / NCTC 12168 / Alc 37) (Ochrobactrum anthropi).